Here is an 82-residue protein sequence, read N- to C-terminus: RNA-binding protein Hfq (82 aa).

In terms of domain architecture, Sm spans 9–68; sequence DPYLNTLRKERVPVSIYLVNGIKLQGQIESFDQFVILLKNTVSQMVYKTAISTVVPSRPV.

Belongs to the Hfq family. As to quaternary structure, homohexamer.

Its function is as follows. RNA chaperone that binds small regulatory RNA (sRNAs) and mRNAs to facilitate mRNA translational regulation in response to envelope stress, environmental stress and changes in metabolite concentrations. Also binds with high specificity to tRNAs. The protein is RNA-binding protein Hfq of Pseudomonas aeruginosa.